A 173-amino-acid chain; its full sequence is Large ribosomal subunit protein uL10 (173 aa).

It belongs to the universal ribosomal protein uL10 family. Part of the ribosomal stalk of the 50S ribosomal subunit. The N-terminus interacts with L11 and the large rRNA to form the base of the stalk. The C-terminus forms an elongated spine to which L12 dimers bind in a sequential fashion forming a multimeric L10(L12)X complex.

Forms part of the ribosomal stalk, playing a central role in the interaction of the ribosome with GTP-bound translation factors. The sequence is that of Large ribosomal subunit protein uL10 from Myxococcus xanthus (strain DK1622).